The sequence spans 435 residues: Actin-like protein 7A (435 aa).

2 disordered regions span residues 1–20 and 29–65; these read MWAPPAAIMGDGPAKKVGNQ and QTASLRDGPAKRAVWVRRRSSEPQEPTESKAAKERPK. The tract at residues 31 to 51 is required for interaction with TES; the sequence is ASLRDGPAKRAVWVRRRSSEP. Residues 47–65 are compositionally biased toward basic and acidic residues; sequence RSSEPQEPTESKAAKERPK.

It belongs to the actin family. As to quaternary structure, interacts (via N-terminus) with TES (via LIM domain 2). Heterodimer with TES; the heterodimer interacts with ENAH to form a heterotrimer. Interacts with ACTL9. Interacts with CYLC1; the interaction may be relevant for proper acrosome attachment to the nuclear envelope.

It localises to the cytoplasm. Its subcellular location is the cytoskeleton. It is found in the golgi apparatus. The protein localises to the nucleus. Functionally, essential for normal spermatogenesis and male fertility. Required for normal sperm head morphology, acroplaxome formation, acrosome attachment, and acrosome granule stability. May anchor and stabilize acrosomal adherence to the acroplaxome at least in part by facilitating the presence of F-actin in the subacrosomal space. May play an important role in formation and fusion of Golgi-derived vesicles during acrosome biogenesis. This is Actin-like protein 7A (ACTL7A) from Macaca fascicularis (Crab-eating macaque).